A 183-amino-acid chain; its full sequence is uncharacterized protein (183 aa).

This is an uncharacterized protein from Archaeoglobus fulgidus (strain ATCC 49558 / DSM 4304 / JCM 9628 / NBRC 100126 / VC-16).